The sequence spans 364 residues: tRNA/tmRNA (uracil-C(5))-methyltransferase (364 aa).

S-adenosyl-L-methionine-binding residues include glutamine 188, tyrosine 216, asparagine 221, glutamate 237, and aspartate 297. The active-site Nucleophile is the cysteine 322. Glutamate 356 (proton acceptor) is an active-site residue.

The protein belongs to the class I-like SAM-binding methyltransferase superfamily. RNA M5U methyltransferase family. TrmA subfamily.

It carries out the reaction uridine(54) in tRNA + S-adenosyl-L-methionine = 5-methyluridine(54) in tRNA + S-adenosyl-L-homocysteine + H(+). The enzyme catalyses uridine(341) in tmRNA + S-adenosyl-L-methionine = 5-methyluridine(341) in tmRNA + S-adenosyl-L-homocysteine + H(+). Functionally, dual-specificity methyltransferase that catalyzes the formation of 5-methyluridine at position 54 (m5U54) in all tRNAs, and that of position 341 (m5U341) in tmRNA (transfer-mRNA). The protein is tRNA/tmRNA (uracil-C(5))-methyltransferase of Teredinibacter turnerae (strain ATCC 39867 / T7901).